The following is a 60-amino-acid chain: Large ribosomal subunit protein bL32 (60 aa).

Residues 1–20 (MAVPKRKTSPSRRNMRRSHH) show a composition bias toward basic residues. The disordered stretch occupies residues 1–60 (MAVPKRKTSPSRRNMRRSHHALGANSFIEDKDTGELRRPHHVDLKTGMYNGKQILTPKED). Residues 28-44 (IEDKDTGELRRPHHVDL) show a composition bias toward basic and acidic residues.

Belongs to the bacterial ribosomal protein bL32 family.

The sequence is that of Large ribosomal subunit protein bL32 from Caulobacter vibrioides (strain ATCC 19089 / CIP 103742 / CB 15) (Caulobacter crescentus).